We begin with the raw amino-acid sequence, 366 residues long: Autoinducer 2-binding periplasmic protein LuxP (366 aa).

Residues 1-13 (MKKILLTCLLASA) form the signal peptide.

This sequence belongs to the bacterial solute-binding protein 2 family.

It is found in the periplasm. Functionally, binds to an autoinducer molecule. This complex then interacts with the LuxQ sensor protein. In Vibrio vulnificus (strain CMCP6), this protein is Autoinducer 2-binding periplasmic protein LuxP (luxP).